The chain runs to 196 residues: Large ribosomal subunit protein eL15 (196 aa).

Over residues 69 to 98 the composition is skewed to basic residues; the sequence is RKGGSRKQRHKAGRRSKRQGVNRLSRRKSI. Disordered stretches follow at residues 69–100 and 161–196; these read RKGGSRKQRHKAGRRSKRQGVNRLSRRKSIQR and FRGLTSAGTKGRGQRTRGTGTEKTRPSVTGNDRQGK. The segment covering 186–196 has biased composition (polar residues); sequence PSVTGNDRQGK.

Belongs to the eukaryotic ribosomal protein eL15 family.

The protein is Large ribosomal subunit protein eL15 of Halorubrum lacusprofundi (strain ATCC 49239 / DSM 5036 / JCM 8891 / ACAM 34).